A 190-amino-acid chain; its full sequence is CASP-like protein 2U2 (190 aa).

At 1 to 10 (MGEKMQGFQG) the chain is on the cytoplasmic side. A helical transmembrane segment spans residues 11-31 (WSIGIRFLTSCVSIASLILLL). Topologically, residues 32-59 (KSKQTVQVSVGLDYVTQQVKYSDTSAFV) are extracellular. The chain crosses the membrane as a helical span at residues 60-80 (YLVFSDILVAVYCIVVLVGLI). Topologically, residues 81-94 (PAALGKSHPGKAGQ) are cytoplasmic. Residues 95–115 (WAIFIFDQVLAYVLLAAASSA) form a helical membrane-spanning segment. Residues 116-144 (TEVAYLADKGMAKTSWEAVCPRFAHFCHT) are Extracellular-facing. A helical transmembrane segment spans residues 145 to 165 (VMASISLSFVAVLLLALLAVV). Over 166–190 (SASGLFGRFYRRPLFAVKMRHNTLI) the chain is Cytoplasmic.

This sequence belongs to the Casparian strip membrane proteins (CASP) family. As to quaternary structure, homodimer and heterodimers.

The protein localises to the cell membrane. This chain is CASP-like protein 2U2, found in Pteridium aquilinum subsp. aquilinum (Bracken fern).